The following is a 477-amino-acid chain: Glutamyl-tRNA(Gln) amidotransferase subunit A (477 aa).

Catalysis depends on charge relay system residues Lys-76 and Ser-151. Residue Ser-175 is the Acyl-ester intermediate of the active site.

This sequence belongs to the amidase family. GatA subfamily. Heterotrimer of A, B and C subunits.

The catalysed reaction is L-glutamyl-tRNA(Gln) + L-glutamine + ATP + H2O = L-glutaminyl-tRNA(Gln) + L-glutamate + ADP + phosphate + H(+). Allows the formation of correctly charged Gln-tRNA(Gln) through the transamidation of misacylated Glu-tRNA(Gln) in organisms which lack glutaminyl-tRNA synthetase. The reaction takes place in the presence of glutamine and ATP through an activated gamma-phospho-Glu-tRNA(Gln). This chain is Glutamyl-tRNA(Gln) amidotransferase subunit A, found in Chlorobium phaeobacteroides (strain BS1).